The chain runs to 442 residues: UDP-N-acetylmuramoylalanine--D-glutamate ligase (442 aa).

Residue 113 to 119 (GSNGKTT) participates in ATP binding.

This sequence belongs to the MurCDEF family.

The protein localises to the cytoplasm. The enzyme catalyses UDP-N-acetyl-alpha-D-muramoyl-L-alanine + D-glutamate + ATP = UDP-N-acetyl-alpha-D-muramoyl-L-alanyl-D-glutamate + ADP + phosphate + H(+). The protein operates within cell wall biogenesis; peptidoglycan biosynthesis. Cell wall formation. Catalyzes the addition of glutamate to the nucleotide precursor UDP-N-acetylmuramoyl-L-alanine (UMA). The polypeptide is UDP-N-acetylmuramoylalanine--D-glutamate ligase (Coxiella burnetii (strain CbuK_Q154) (Coxiella burnetii (strain Q154))).